A 592-amino-acid chain; its full sequence is Frizzled-5 (592 aa).

The first 38 residues, 1–38 (MRKPADEHHFTMETSGMHLVGFWLHVLLLFQLSGLGDS), serve as a signal peptide directing secretion. Residues 39–248 (ASKDIVCEPI…QDERTFTTFW (210 aa)) are Extracellular-facing. The 122-residue stretch at 40 to 161 (SKDIVCEPIT…GDTDRLCMDR (122 aa)) folds into the FZ domain. 5 disulfide bridges follow: Cys45–Cys106, Cys53–Cys99, Cys90–Cys128, Cys117–Cys158, and Cys121–Cys145. The disordered stretch occupies residues 162–192 (NSSETTTLSPPFPKPTPKGTPRHRATAKSAP). A helical transmembrane segment spans residues 249 to 269 (IGLWSVLCFVSTFTTVATFLI). Residues 270 to 280 (DMERFKYPERP) lie on the Cytoplasmic side of the membrane. A helical transmembrane segment spans residues 281 to 301 (IIFLAACYLFVSLGYIVRLLA). At 302–327 (GHERVACEGTGDQQHILYDTTGPALC) the chain is on the extracellular side. A helical transmembrane segment spans residues 328-348 (TLVFLLIYFFGMASSIWWVVL). The Cytoplasmic segment spans residues 349–370 (SFTWFLAAGMKWGNEAIAGYSQ). The helical transmembrane segment at 371-391 (YFHLAAWLVPSVKSIAVLALS) threads the bilayer. Residues 392–414 (SVDGDPVAGICYVGNQSLEGLRG) lie on the Extracellular side of the membrane. The helical transmembrane segment at 415 to 435 (FVLAPLVVYLFTGSLFLLAGF) threads the bilayer. At 436 to 461 (VSLFRIRSVIKQGGTKTDKLEKLMIR) the chain is on the cytoplasmic side. A helical transmembrane segment spans residues 462–482 (IGLFTVLYTVPATIVVACLVY). Over 483–512 (EQHYRPSWERALACSCPSERQRLGMGPDYA) the chain is Extracellular. A helical transmembrane segment spans residues 513–533 (VFMLKYFMCLVVGITSGVWIW). The Cytoplasmic portion of the chain corresponds to 534-592 (SGKTLESWRRFIARYVPCRTRKPPVSASSMYSEASTALTARAGTAPTGTYHKSAPSSHV).

This sequence belongs to the G-protein coupled receptor Fz/Smo family.

Its subcellular location is the cell membrane. The protein resides in the golgi apparatus membrane. It is found in the synapse. The protein localises to the perikaryon. It localises to the cell projection. Its subcellular location is the dendrite. The protein resides in the axon. Functionally, receptor for Wnt proteins. Following binding, activates the canonical Wnt/beta-catenin signaling pathway. Also activates wnt non-canonical signaling. In neurons, activation of the Wnt pathway promotes formation of synapses. May be involved in transduction and intercellular transmission of polarity information during tissue morphogenesis and/or in differentiated tissues. Plays a role in early eye development, possibly through wnt non-canonical signaling. As a receptor for wnt11, promotes eye formation, at least partially, by antagonizing the Wnt/beta-catenin pathway. In addition, promotes coherence of eye field cells, potentially contributing to the coordinated morphogenetic behaviors of cells in the nascent eye field. This is Frizzled-5 (fzd5) from Danio rerio (Zebrafish).